Here is a 382-residue protein sequence, read N- to C-terminus: MTEQRPLTIALVAGETSGDILGAGLIRALKERVPNARFVGVAGPRMQAEGCEAWYEMEELAVMGIVEVLGRLRRLLHIRADLTKRFGELKPDVFVGIDAPDFNITLEGNLKKQGIKTIHYVSPSVWAWRQKRVFKIGRATDLVLAFLPFEKAFYDKYNVPCRFIGHTMADAMPLDPDKNAARDVLGIPHDAHCLALLPGSRGAEVEMLSADFLKTAQLLRQTYPDLEIVVPLVNAKRREQFERIKAEVAPDFSVHLLDGMGREAMVASDAALLASGTAALECMLAKCPMVVGYRMKPFTFWLAKRLVKTDYVSLPNLLAGRELVKELLQEECEPQKLAAALLPLLANGKISHAMHDTFRELHQQIRCNADEQAAQAVLELAQ.

The protein belongs to the LpxB family.

The catalysed reaction is 2-N,3-O-bis[(3R)-3-hydroxytetradecanoyl]-alpha-D-glucosaminyl 1-phosphate + UDP-2-N,3-O-bis[(3R)-3-hydroxytetradecanoyl]-alpha-D-glucosamine = lipid A disaccharide (E. coli) + UDP + H(+). It carries out the reaction a lipid X + a UDP-2-N,3-O-bis[(3R)-3-hydroxyacyl]-alpha-D-glucosamine = a lipid A disaccharide + UDP + H(+). It functions in the pathway glycolipid biosynthesis; lipid IV(A) biosynthesis; lipid IV(A) from (3R)-3-hydroxytetradecanoyl-[acyl-carrier-protein] and UDP-N-acetyl-alpha-D-glucosamine: step 5/6. In terms of biological role, condensation of UDP-2,3-diacylglucosamine and 2,3-diacylglucosamine-1-phosphate to form lipid A disaccharide, a precursor of lipid A, a phosphorylated glycolipid that anchors the lipopolysaccharide to the outer membrane of the cell. This is Lipid-A-disaccharide synthase from Shigella boydii serotype 18 (strain CDC 3083-94 / BS512).